The chain runs to 483 residues: Putative (R)-citramalate synthase CimA (483 aa).

The region spanning 1 to 245 is the Pyruvate carboxyltransferase domain; sequence MRDGEQTPGV…DTGIKHEQIY (245 aa).

This sequence belongs to the alpha-IPM synthase/homocitrate synthase family. Homodimer.

It carries out the reaction pyruvate + acetyl-CoA + H2O = (3R)-citramalate + CoA + H(+). Its pathway is amino-acid biosynthesis; L-isoleucine biosynthesis; 2-oxobutanoate from pyruvate: step 1/3. Catalyzes the condensation of pyruvate and acetyl-coenzyme A to form (R)-citramalate. The sequence is that of Putative (R)-citramalate synthase CimA from Methanosarcina mazei (strain ATCC BAA-159 / DSM 3647 / Goe1 / Go1 / JCM 11833 / OCM 88) (Methanosarcina frisia).